We begin with the raw amino-acid sequence, 90 residues long: MARVTVQDAVEKIGNRFDLVLVAARRARQMQSGGKDALVPEENDKPTVIALREIEEGLITKDVLDARERQEQQEQEAAELAAVSSIMHNR.

Residues 70 to 90 (QEQQEQEAAELAAVSSIMHNR) form a disordered region.

This sequence belongs to the RNA polymerase subunit omega family. The RNAP catalytic core consists of 2 alpha, 1 beta, 1 beta' and 1 omega subunit. When a sigma factor is associated with the core the holoenzyme is formed, which can initiate transcription.

The enzyme catalyses RNA(n) + a ribonucleoside 5'-triphosphate = RNA(n+1) + diphosphate. In terms of biological role, promotes RNA polymerase assembly. Latches the N- and C-terminal regions of the beta' subunit thereby facilitating its interaction with the beta and alpha subunits. In Vibrio cholerae serotype O1 (strain ATCC 39541 / Classical Ogawa 395 / O395), this protein is DNA-directed RNA polymerase subunit omega.